Consider the following 470-residue polypeptide: 3-isopropylmalate dehydratase large subunit (470 aa).

The [4Fe-4S] cluster site is built by C348, C409, and C412.

It belongs to the aconitase/IPM isomerase family. LeuC type 1 subfamily. As to quaternary structure, heterodimer of LeuC and LeuD. Requires [4Fe-4S] cluster as cofactor.

The catalysed reaction is (2R,3S)-3-isopropylmalate = (2S)-2-isopropylmalate. It participates in amino-acid biosynthesis; L-leucine biosynthesis; L-leucine from 3-methyl-2-oxobutanoate: step 2/4. Catalyzes the isomerization between 2-isopropylmalate and 3-isopropylmalate, via the formation of 2-isopropylmaleate. The sequence is that of 3-isopropylmalate dehydratase large subunit from Thioalkalivibrio sulfidiphilus (strain HL-EbGR7).